The following is a 61-amino-acid chain: Sec-independent protein translocase protein TatA (61 aa).

The chain crosses the membrane as a helical span at residues 1 to 21 (MFGLGITEILLILGIIILIFG).

The protein belongs to the TatA/E family. In terms of assembly, the Tat system comprises two distinct complexes: a TatABC complex, containing multiple copies of TatA, TatB and TatC subunits, and a separate TatA complex, containing only TatA subunits. Substrates initially bind to the TatABC complex, which probably triggers association of the separate TatA complex to form the active translocon.

Its subcellular location is the cell inner membrane. Functionally, part of the twin-arginine translocation (Tat) system that transports large folded proteins containing a characteristic twin-arginine motif in their signal peptide across membranes. TatA could form the protein-conducting channel of the Tat system. This chain is Sec-independent protein translocase protein TatA, found in Maridesulfovibrio salexigens (strain ATCC 14822 / DSM 2638 / NCIMB 8403 / VKM B-1763) (Desulfovibrio salexigens).